Reading from the N-terminus, the 297-residue chain is Tyrosine recombinase XerD (297 aa).

A Core-binding (CB) domain is found at 1–86 (MNDLIEDFLH…SLRSFFHYLM (86 aa)). Positions 107-291 (GLPKVLNLDD…TKLRLKDVYK (185 aa)) constitute a Tyr recombinase domain. Residues Arg147, Lys171, His243, Arg246, and His269 contribute to the active site. The active-site O-(3'-phospho-DNA)-tyrosine intermediate is Tyr278.

Belongs to the 'phage' integrase family. XerD subfamily. Forms a cyclic heterotetrameric complex composed of two molecules of XerC and two molecules of XerD.

Its subcellular location is the cytoplasm. Its function is as follows. Site-specific tyrosine recombinase, which acts by catalyzing the cutting and rejoining of the recombining DNA molecules. The XerC-XerD complex is essential to convert dimers of the bacterial chromosome into monomers to permit their segregation at cell division. It also contributes to the segregational stability of plasmids. The protein is Tyrosine recombinase XerD of Listeria monocytogenes serotype 4b (strain F2365).